The sequence spans 579 residues: Aspartate--tRNA(Asp/Asn) ligase (579 aa).

Glutamate 171 contacts L-aspartate. Residues 195–198 are aspartate; sequence QLFK. Arginine 217 is a binding site for L-aspartate. ATP is bound by residues 217 to 219 and glutamine 226; that span reads RDE. Histidine 444 contacts L-aspartate. Position 475 (glutamate 475) interacts with ATP. An L-aspartate-binding site is contributed by arginine 482. 527-530 is an ATP binding site; that stretch reads GLDR.

It belongs to the class-II aminoacyl-tRNA synthetase family. Type 1 subfamily. In terms of assembly, homodimer.

It is found in the cytoplasm. It carries out the reaction tRNA(Asx) + L-aspartate + ATP = L-aspartyl-tRNA(Asx) + AMP + diphosphate. Aspartyl-tRNA synthetase with relaxed tRNA specificity since it is able to aspartylate not only its cognate tRNA(Asp) but also tRNA(Asn). Reaction proceeds in two steps: L-aspartate is first activated by ATP to form Asp-AMP and then transferred to the acceptor end of tRNA(Asp/Asn). In Thermotoga neapolitana (strain ATCC 49049 / DSM 4359 / NBRC 107923 / NS-E), this protein is Aspartate--tRNA(Asp/Asn) ligase.